A 172-amino-acid chain; its full sequence is Large ribosomal subunit protein uL10 (172 aa).

Belongs to the universal ribosomal protein uL10 family. As to quaternary structure, part of the ribosomal stalk of the 50S ribosomal subunit. The N-terminus interacts with L11 and the large rRNA to form the base of the stalk. The C-terminus forms an elongated spine to which L12 dimers bind in a sequential fashion forming a multimeric L10(L12)X complex.

Forms part of the ribosomal stalk, playing a central role in the interaction of the ribosome with GTP-bound translation factors. The chain is Large ribosomal subunit protein uL10 from Bradyrhizobium sp. (strain ORS 278).